The sequence spans 516 residues: Ribonuclease Y (516 aa).

Residues 1 to 21 (MLIKIVIACVITAIIVALIAW) form a helical membrane-spanning segment. Residues 206-269 (TISVVQLPND…ETARIALEKL (64 aa)) enclose the KH domain. An HD domain is found at 332 to 425 (ALKHSIEVAI…VQAADTISAA (94 aa)).

The protein belongs to the RNase Y family.

The protein resides in the cell membrane. Its function is as follows. Endoribonuclease that initiates mRNA decay. This Lachnoclostridium phytofermentans (strain ATCC 700394 / DSM 18823 / ISDg) (Clostridium phytofermentans) protein is Ribonuclease Y.